Consider the following 100-residue polypeptide: MGFNNLVSLAVLIEKVFPIRYTPAGIPVLDIILKHESWQEENGQQCLVQLEIPARILGRQAEEWQYRQGVYVHVEGFLAQKSRRSLMPMLRIQNIQEYKG.

The region spanning 1–99 (MGFNNLVSLA…LRIQNIQEYK (99 aa)) is the SSB domain.

The protein belongs to the PriB family. As to quaternary structure, homodimer. Interacts with PriA and DnaT. Component of the replication restart primosome. Primosome assembly occurs via a 'hand-off' mechanism. PriA binds to replication forks, subsequently PriB then DnaT bind; DnaT then displaces ssDNA to generate the helicase loading substrate.

Its function is as follows. Involved in the restart of stalled replication forks, which reloads the replicative helicase on sites other than the origin of replication; the PriA-PriB pathway is the major replication restart pathway. During primosome assembly it facilitates complex formation between PriA and DnaT on DNA; stabilizes PriA on DNA. Stimulates the DNA unwinding activity of PriA helicase. The polypeptide is Replication restart protein PriB (Neisseria meningitidis serogroup A / serotype 4A (strain DSM 15465 / Z2491)).